A 307-amino-acid polypeptide reads, in one-letter code: Ribosomal protein L11 methyltransferase (307 aa).

The S-adenosyl-L-methionine site is built by threonine 144, glycine 165, aspartate 187, and asparagine 235.

It belongs to the methyltransferase superfamily. PrmA family.

The protein localises to the cytoplasm. It catalyses the reaction L-lysyl-[protein] + 3 S-adenosyl-L-methionine = N(6),N(6),N(6)-trimethyl-L-lysyl-[protein] + 3 S-adenosyl-L-homocysteine + 3 H(+). Methylates ribosomal protein L11. This chain is Ribosomal protein L11 methyltransferase, found in Psychrobacter sp. (strain PRwf-1).